We begin with the raw amino-acid sequence, 89 residues long: Small ribosomal subunit protein uS17 (89 aa).

Belongs to the universal ribosomal protein uS17 family. Part of the 30S ribosomal subunit.

Its function is as follows. One of the primary rRNA binding proteins, it binds specifically to the 5'-end of 16S ribosomal RNA. The chain is Small ribosomal subunit protein uS17 from Xanthomonas campestris pv. campestris (strain 8004).